The chain runs to 445 residues: Damage suppressor protein (445 aa).

Composition is skewed to polar residues over residues 1 to 15 and 25 to 47; these read MAST…SSTG and SQGS…SATS. Disordered stretches follow at residues 1–145 and 203–445; these read MAST…HSVI and YHSV…RKRK. Positions 61-73 are enriched in low complexity; the sequence is SSTTAGSSSTQGQ. Over residues 74–87 the composition is skewed to polar residues; the sequence is KFSTTPTDPKTFSS. Positions 88-97 are enriched in basic and acidic residues; sequence DQKEKSKSPA. Positions 117–138 are enriched in low complexity; the sequence is DAKSSGQSQGQSKDSGKSSSDS. Positions 207-228 are enriched in basic and acidic residues; that stretch reads VGDKTDDKKEGEHSGDKKDDSK. The required and sufficient for DNA-binding and co-localization with nuclear DNA stretch occupies residues 208–445; it reads GDKTDDKKEG…GGKAGGRKRK (238 aa). Positions 245-256 are enriched in polar residues; it reads ETSGQAESSSGN. The span at 257-306 shows a compositional bias: low complexity; the sequence is EGAAPAKGRGRGRPPAAAKGVAKGAAKGAAASKGAKSGAESSKGGEQSSG. Residues 329–338 are compositionally biased toward gly residues; that stretch reads GEGGASGSEG. Residues 360–445 are required for nucleosome binding and for the protection of chromatin from hydroxyl radical-mediated DNA damage; sequence EPPRRSSRLT…GGKAGGRKRK (86 aa). Low complexity predominate over residues 367 to 431; that stretch reads RLTSSGTGAG…ASKAPQNGAG (65 aa). Over residues 432–445 the composition is skewed to basic residues; it reads AKKKGGKAGGRKRK.

It is found in the nucleus. Its function is as follows. Unique chromatin-associating protein that contributes to the organism's exceptional tolerance to harsh environmental stresses. Binds with a higher affinity to nucleosomes than to free DNA. Protects chromatin from damage caused by hydroxyl radical-mediated cleavage induced by X-rays or treatment with hydrogen peroxide. Suppresses X-ray-induced DNA damage that includes single-strand breaks (SSBs) as well as more hazardous double-strand breaks (DSBs), and improves radiotolerance. Also shields DNA against reactive oxygen species (ROS). This Ramazzottius varieornatus (Water bear) protein is Damage suppressor protein.